The primary structure comprises 217 residues: MAMFLKSRGVRSCRDRRLLSDEEEETSQSSSYTLGSQASQSIQEEDVSDTDESDYSDEDEEIDLEEEYPSDEDPSEGSDSDPSWHPSDSDESDYSESDEDEATPGSQASRSSRVSPSTQQSSGLTPTPSFSRPRTRAPPRPPAPAPVRGRASAPPRPPAPVQQSTKDKGPHRPTRPVLRGPAPRRPPPPSSPNTYNKHMMETTPPIKGNNNYNWPWL.

The interval 1-217 (MAMFLKSRGV…GNNNYNWPWL (217 aa)) is disordered. The span at 32-42 (YTLGSQASQSI) shows a compositional bias: polar residues. Over residues 43 to 79 (QEEDVSDTDESDYSDEDEEIDLEEEYPSDEDPSEGSD) the composition is skewed to acidic residues. The interaction with host histones H3/H4 stretch occupies residues 63–64 (DL). Residues 81–84 (DPSW) are interaction with host H2A/H2B. Residues 89-102 (SDESDYSESDEDEA) show a composition bias toward acidic residues. A compositionally biased stretch (low complexity) spans 106 to 132 (SQASRSSRVSPSTQQSSGLTPTPSFSR). Residues 136 to 145 (RAPPRPPAPA) are compositionally biased toward pro residues. The span at 208–217 (GNNNYNWPWL) shows a compositional bias: polar residues.

The protein belongs to the lymphocryptovirus BKRF4 family. In terms of assembly, forms a complex with the host H3/H4 dimer and histone chaperone ASF1. Also forms a complex with host H2A/H2B dimer. Interacts (via C-terminus) with BGLF2; this interaction is important for infectious virion production.

The protein localises to the virion tegument. Its subcellular location is the host nucleus. The protein resides in the host cytoplasm. It is found in the host perinuclear region. Histone-binding protein that binds to histones H2A/H2B, H3/H4 and cellular chromatin to overcome the host DNA damage response triggered by the viral genome ends. Interferes with histone ubiquitination and recruitment of repair proteins. The polypeptide is Tegument protein BKRF4 (Epstein-Barr virus (strain AG876) (HHV-4)).